A 320-amino-acid polypeptide reads, in one-letter code: tRNA-cytidine(32) 2-sulfurtransferase (320 aa).

The PP-loop motif motif lies at 54 to 59; that stretch reads SGGKDS. Residues cysteine 129, cysteine 132, and cysteine 220 each coordinate [4Fe-4S] cluster.

The protein belongs to the TtcA family. Homodimer. Mg(2+) is required as a cofactor. [4Fe-4S] cluster serves as cofactor.

It localises to the cytoplasm. The enzyme catalyses cytidine(32) in tRNA + S-sulfanyl-L-cysteinyl-[cysteine desulfurase] + AH2 + ATP = 2-thiocytidine(32) in tRNA + L-cysteinyl-[cysteine desulfurase] + A + AMP + diphosphate + H(+). It functions in the pathway tRNA modification. Functionally, catalyzes the ATP-dependent 2-thiolation of cytidine in position 32 of tRNA, to form 2-thiocytidine (s(2)C32). The sulfur atoms are provided by the cysteine/cysteine desulfurase (IscS) system. This chain is tRNA-cytidine(32) 2-sulfurtransferase, found in Bordetella parapertussis (strain 12822 / ATCC BAA-587 / NCTC 13253).